A 325-amino-acid polypeptide reads, in one-letter code: Capsid protein (325 aa).

The segment at 30-89 is disordered; that stretch reads DLRTNPPPTEPPSRKSKLMSTSENKGKQPLHPPPTEGFPKPPPPPSSTPTTPTPPDQTKA. Over residues 59–84 the composition is skewed to pro residues; the sequence is LHPPPTEGFPKPPPPPSSTPTTPTPP.

The protein belongs to the potexviruses coat protein family.

It localises to the virion. In terms of biological role, required for genome encapsidation. Forms ribonucleoprotein complexes along with TGB1 helicase and viral RNA. The polypeptide is Capsid protein (Citrus (ICRSV)).